Consider the following 533-residue polypeptide: NAD(P)H-quinone oxidoreductase chain 4 1 (533 aa).

Transmembrane regions (helical) follow at residues 6-26 (FPWL…IPLI), 37-57 (YSLF…WQHF), 87-107 (LSMP…LASW), 113-133 (PKLF…VFTA), 137-157 (MLFF…ISIW), 169-189 (FILY…ALAF), 209-229 (WLEL…LSIF), 243-263 (NAPG…YALI), 277-297 (FAPV…LNAF), 311-331 (ISHM…GLNG), 332-352 (ALLQ…LAGV), 376-396 (FALF…SGFV), 417-437 (VTIL…LSML), and 461-481 (LFVA…PKLT).

This sequence belongs to the complex I subunit 4 family.

It is found in the cellular thylakoid membrane. The enzyme catalyses a plastoquinone + NADH + (n+1) H(+)(in) = a plastoquinol + NAD(+) + n H(+)(out). It carries out the reaction a plastoquinone + NADPH + (n+1) H(+)(in) = a plastoquinol + NADP(+) + n H(+)(out). NDH-1 shuttles electrons from NAD(P)H, via FMN and iron-sulfur (Fe-S) centers, to quinones in the respiratory chain. The immediate electron acceptor for the enzyme in this species is believed to be plastoquinone. Couples the redox reaction to proton translocation (for every two electrons transferred, four hydrogen ions are translocated across the cytoplasmic membrane), and thus conserves the redox energy in a proton gradient. This chain is NAD(P)H-quinone oxidoreductase chain 4 1, found in Synechococcus elongatus (strain ATCC 33912 / PCC 7942 / FACHB-805) (Anacystis nidulans R2).